A 357-amino-acid chain; its full sequence is UDP-N-acetylglucosamine--N-acetylmuramyl-(pentapeptide) pyrophosphoryl-undecaprenol N-acetylglucosamine transferase (357 aa).

Residues 14-16, N125, S190, and Q290 contribute to the UDP-N-acetyl-alpha-D-glucosamine site; that span reads SGG.

This sequence belongs to the glycosyltransferase 28 family. MurG subfamily.

It localises to the cell inner membrane. It carries out the reaction di-trans,octa-cis-undecaprenyl diphospho-N-acetyl-alpha-D-muramoyl-L-alanyl-D-glutamyl-meso-2,6-diaminopimeloyl-D-alanyl-D-alanine + UDP-N-acetyl-alpha-D-glucosamine = di-trans,octa-cis-undecaprenyl diphospho-[N-acetyl-alpha-D-glucosaminyl-(1-&gt;4)]-N-acetyl-alpha-D-muramoyl-L-alanyl-D-glutamyl-meso-2,6-diaminopimeloyl-D-alanyl-D-alanine + UDP + H(+). It functions in the pathway cell wall biogenesis; peptidoglycan biosynthesis. Functionally, cell wall formation. Catalyzes the transfer of a GlcNAc subunit on undecaprenyl-pyrophosphoryl-MurNAc-pentapeptide (lipid intermediate I) to form undecaprenyl-pyrophosphoryl-MurNAc-(pentapeptide)GlcNAc (lipid intermediate II). This is UDP-N-acetylglucosamine--N-acetylmuramyl-(pentapeptide) pyrophosphoryl-undecaprenol N-acetylglucosamine transferase from Chlamydia felis (strain Fe/C-56) (Chlamydophila felis).